We begin with the raw amino-acid sequence, 431 residues long: Ribosomal RNA small subunit methyltransferase B (431 aa).

S-adenosyl-L-methionine is bound by residues 254-260, Asp277, Asp303, and Asp322; that span reads CAAPGGK. Cys375 serves as the catalytic Nucleophile.

This sequence belongs to the class I-like SAM-binding methyltransferase superfamily. RsmB/NOP family.

The protein localises to the cytoplasm. It carries out the reaction cytidine(967) in 16S rRNA + S-adenosyl-L-methionine = 5-methylcytidine(967) in 16S rRNA + S-adenosyl-L-homocysteine + H(+). Functionally, specifically methylates the cytosine at position 967 (m5C967) of 16S rRNA. This is Ribosomal RNA small subunit methyltransferase B from Klebsiella pneumoniae subsp. pneumoniae (strain ATCC 700721 / MGH 78578).